Here is a 387-residue protein sequence, read N- to C-terminus: Succinate--CoA ligase [ADP-forming] subunit beta (387 aa).

Residues Lys-9–Lys-236 form the ATP-grasp domain. ATP contacts are provided by residues Lys-45, Gly-52–Gly-54, Ser-94, and Glu-99. The Mg(2+) site is built by Asn-191 and Asp-205. Substrate-binding positions include Asn-256 and Gly-318–Thr-320.

This sequence belongs to the succinate/malate CoA ligase beta subunit family. In terms of assembly, heterotetramer of two alpha and two beta subunits. It depends on Mg(2+) as a cofactor.

It carries out the reaction succinate + ATP + CoA = succinyl-CoA + ADP + phosphate. The enzyme catalyses GTP + succinate + CoA = succinyl-CoA + GDP + phosphate. It functions in the pathway carbohydrate metabolism; tricarboxylic acid cycle; succinate from succinyl-CoA (ligase route): step 1/1. Its function is as follows. Succinyl-CoA synthetase functions in the citric acid cycle (TCA), coupling the hydrolysis of succinyl-CoA to the synthesis of either ATP or GTP and thus represents the only step of substrate-level phosphorylation in the TCA. The beta subunit provides nucleotide specificity of the enzyme and binds the substrate succinate, while the binding sites for coenzyme A and phosphate are found in the alpha subunit. The protein is Succinate--CoA ligase [ADP-forming] subunit beta of Mycobacterium ulcerans (strain Agy99).